The following is a 156-amino-acid chain: Ribosomal RNA large subunit methyltransferase H (156 aa).

S-adenosyl-L-methionine contacts are provided by residues Leu73, Gly104, and 123–128 (LSALTL).

It belongs to the RNA methyltransferase RlmH family. Homodimer.

The protein localises to the cytoplasm. It carries out the reaction pseudouridine(1915) in 23S rRNA + S-adenosyl-L-methionine = N(3)-methylpseudouridine(1915) in 23S rRNA + S-adenosyl-L-homocysteine + H(+). Functionally, specifically methylates the pseudouridine at position 1915 (m3Psi1915) in 23S rRNA. The chain is Ribosomal RNA large subunit methyltransferase H from Vibrio vulnificus (strain CMCP6).